The following is a 391-amino-acid chain: MRYLTAGESHGRALVTIVEGLPAGVPVDLAAIDRDLARRQSGYGRGGRMKIEQDRVQVLSGIRHGKTLGSPVALLVENRDWLNWTEVMSPAPLEAYTDPRAAQKVRTRPRPGHADLAGALKYDHADLRNVLERASARETAARVAAGSLAKQYLAPFGIRVAGYVRSIGPVEAQPPAGLDLDGIVARAEASPVRCPDPAASARMVEEIDAAKRDGDSLGGVVEVVAAGLPPGLGSHVHWDRKLDGALGAALLSIQAAKGVEIGDGFLGARRRGSEVHDEIGWSPDRGYFRYTNRAGGLEGGMTNGMDLVVRVAFKPIATLYKPLRSVEIDTHVEAAAGIERSDVCAVPAAAVIAECVTAFELARFVAEKFGGDSLEEALRNFRGYLEQIARR.

NADP(+) contacts are provided by Arg-39 and Arg-45. FMN contacts are provided by residues 133–135 (RAS), 254–255 (QA), Gly-299, 314–318 (KPIAT), and Arg-340.

It belongs to the chorismate synthase family. In terms of assembly, homotetramer. The cofactor is FMNH2.

It catalyses the reaction 5-O-(1-carboxyvinyl)-3-phosphoshikimate = chorismate + phosphate. The protein operates within metabolic intermediate biosynthesis; chorismate biosynthesis; chorismate from D-erythrose 4-phosphate and phosphoenolpyruvate: step 7/7. Its function is as follows. Catalyzes the anti-1,4-elimination of the C-3 phosphate and the C-6 proR hydrogen from 5-enolpyruvylshikimate-3-phosphate (EPSP) to yield chorismate, which is the branch point compound that serves as the starting substrate for the three terminal pathways of aromatic amino acid biosynthesis. This reaction introduces a second double bond into the aromatic ring system. The protein is Chorismate synthase of Symbiobacterium thermophilum (strain DSM 24528 / JCM 14929 / IAM 14863 / T).